The primary structure comprises 543 residues: Steroid receptor seven-up, isoforms B/C (543 aa).

The disordered stretch occupies residues Pro38 to Gln191. Positions Ala56–Val68 are enriched in low complexity. Residues Gln83–Gly101 show a composition bias toward polar residues. Gly residues predominate over residues Gly122–Pro141. Over residues Met158–Gly170 the composition is skewed to polar residues. The segment covering Ser171–Gln191 has biased composition (low complexity). The nuclear receptor DNA-binding region spans Asn197–Arg272. 2 consecutive NR C4-type zinc fingers follow at residues Cys200–Cys220 and Cys236–Cys260. Residues Tyr307–Gly532 enclose the NR LBD domain.

Belongs to the nuclear hormone receptor family. NR2 subfamily. In terms of tissue distribution, expressed in several embryonic tissues; dorsal vessel, oenocyte and fat body. CNS expression is dynamic and confined to temporally restricted subsections of the NB lineage; expressed in many NB and GMCs, but only a small number of neurons.

It is found in the nucleus. Functionally, receptor that is required in photoreceptors R1, R3, R4 and R6 during eye development; generation of the ganglion mother cell-2 (GMC-2) fate in the nb7-3 lineage, coinciding with the transition in the expression of HB to KR in the neuroblasts (NBs). The chain is Steroid receptor seven-up, isoforms B/C (svp) from Drosophila melanogaster (Fruit fly).